A 538-amino-acid polypeptide reads, in one-letter code: MFS-type transporter oryC (538 aa).

Helical transmembrane passes span 14-34 (LTGG…MSLF), 67-87 (TVTA…FTIG), 96-116 (ILLG…SFSL), 120-140 (FVGR…APIW), 162-182 (IFGF…GGSI), and 186-206 (FPLA…PWLP). N-linked (GlcNAc...) asparagine glycosylation occurs at asparagine 268. 6 helical membrane-spanning segments follow: residues 288 to 308 (FGGI…SVGL), 315 to 335 (LLAA…VLLV), 342 to 362 (GLML…TILL), 379 to 399 (VAFF…VPWL), 416 to 436 (VATA…PIGI), and 443 to 463 (FWIV…FLYP). An N-linked (GlcNAc...) asparagine glycan is attached at asparagine 467.

It belongs to the major facilitator superfamily. Sugar transporter (TC 2.A.1.1) family.

Its subcellular location is the membrane. Functionally, MFS-type transporter; part of the gene cluster that mediates the biosynthesis of oryzines, natural products with an unusual maleidride backbone. This is MFS-type transporter oryC from Aspergillus oryzae (strain ATCC 42149 / RIB 40) (Yellow koji mold).